Here is a 162-residue protein sequence, read N- to C-terminus: Phosphopantetheine adenylyltransferase (162 aa).

Substrate is bound at residue Ser-11. ATP contacts are provided by residues 11 to 12 and His-19; that span reads SF. Residues Lys-43, Val-76, and Arg-90 each contribute to the substrate site. Residues 91–93, Glu-101, and 126–132 each bind ATP; these read GLR and HLYISSS.

It belongs to the bacterial CoaD family. As to quaternary structure, homohexamer. Mg(2+) is required as a cofactor.

The protein localises to the cytoplasm. The enzyme catalyses (R)-4'-phosphopantetheine + ATP + H(+) = 3'-dephospho-CoA + diphosphate. It functions in the pathway cofactor biosynthesis; coenzyme A biosynthesis; CoA from (R)-pantothenate: step 4/5. Functionally, reversibly transfers an adenylyl group from ATP to 4'-phosphopantetheine, yielding dephospho-CoA (dPCoA) and pyrophosphate. This Streptococcus pneumoniae (strain CGSP14) protein is Phosphopantetheine adenylyltransferase.